We begin with the raw amino-acid sequence, 148 residues long: Ponticulin-like protein D (148 aa).

A signal peptide spans 1-20 (MLLNKSLLLLVAFVFAIVSA). Asn67 is a glycosylation site (N-linked (GlcNAc...) asparagine). Residue Asp125 is the site of GPI-like-anchor amidated aspartate attachment. Positions 126–148 (SSAAATMIASFSAILIALLFALL) are cleaved as a propeptide — removed in mature form.

This sequence belongs to the ponticulin family. In terms of processing, the GPI-like-anchor contains a phosphoceramide group, rather than a phosphatidyl group.

It is found in the cell membrane. In Dictyostelium discoideum (Social amoeba), this protein is Ponticulin-like protein D (ponD).